Reading from the N-terminus, the 358-residue chain is Methylthioribose-1-phosphate isomerase (358 aa).

Residues 54 to 56, R96, and Q205 contribute to the substrate site; that span reads RGA. Residue D246 is the Proton donor of the active site. 256 to 257 serves as a coordination point for substrate; that stretch reads NK.

This sequence belongs to the eIF-2B alpha/beta/delta subunits family. MtnA subfamily.

It catalyses the reaction 5-(methylsulfanyl)-alpha-D-ribose 1-phosphate = 5-(methylsulfanyl)-D-ribulose 1-phosphate. It participates in amino-acid biosynthesis; L-methionine biosynthesis via salvage pathway; L-methionine from S-methyl-5-thio-alpha-D-ribose 1-phosphate: step 1/6. In terms of biological role, catalyzes the interconversion of methylthioribose-1-phosphate (MTR-1-P) into methylthioribulose-1-phosphate (MTRu-1-P). This chain is Methylthioribose-1-phosphate isomerase, found in Pseudomonas syringae pv. syringae (strain B728a).